The following is a 237-amino-acid chain: Uridylate kinase (237 aa).

Residue 9 to 12 (KLSG) coordinates ATP. Positions 17–22 (GSQGYG) are involved in allosteric activation by GTP. Glycine 51 contacts UMP. Residues glycine 52 and arginine 56 each contribute to the ATP site. Residues aspartate 71 and 132–139 (CGNPFFTT) each bind UMP. Residues threonine 159, tyrosine 165, and aspartate 168 each coordinate ATP.

The protein belongs to the UMP kinase family. Homohexamer.

Its subcellular location is the cytoplasm. The enzyme catalyses UMP + ATP = UDP + ADP. It functions in the pathway pyrimidine metabolism; CTP biosynthesis via de novo pathway; UDP from UMP (UMPK route): step 1/1. Its activity is regulated as follows. Allosterically activated by GTP. Inhibited by UTP. Functionally, catalyzes the reversible phosphorylation of UMP to UDP. This Synechococcus sp. (strain CC9605) protein is Uridylate kinase.